We begin with the raw amino-acid sequence, 102 residues long: Large ribosomal subunit protein mL63 (102 aa).

Belongs to the mitochondrion-specific ribosomal protein mL63 family. As to quaternary structure, component of the mitochondrial large ribosomal subunit (mt-LSU). Mature mammalian 55S mitochondrial ribosomes consist of a small (28S) and a large (39S) subunit. The 28S small subunit contains a 12S ribosomal RNA (12S mt-rRNA) and 30 different proteins. The 39S large subunit contains a 16S rRNA (16S mt-rRNA), a copy of mitochondrial valine transfer RNA (mt-tRNA(Val)), which plays an integral structural role, and 52 different proteins.

The protein localises to the mitochondrion. The polypeptide is Large ribosomal subunit protein mL63 (MRPL57) (Homo sapiens (Human)).